Consider the following 435-residue polypeptide: UPF0597 protein AHA_4077 (435 aa).

Belongs to the UPF0597 family.

This is UPF0597 protein AHA_4077 from Aeromonas hydrophila subsp. hydrophila (strain ATCC 7966 / DSM 30187 / BCRC 13018 / CCUG 14551 / JCM 1027 / KCTC 2358 / NCIMB 9240 / NCTC 8049).